The following is a 386-amino-acid chain: Threonine--tRNA ligase editing subunit (386 aa).

The protein belongs to the class-II aminoacyl-tRNA synthetase family. Archaea-specific ThrRS editing domain subfamily. As to quaternary structure, probably interacts with its catalytic subunit (AC Q97VW8); a subunit fusion (in the order edit-catalytic) is fully functional.

The protein resides in the cytoplasm. Freestanding tRNA editing subunit of threonine--tRNA ligase, the catalytic subunit is AC Q97VW8. Deacylates (edits) mischarged L-seryl-tRNA(Thr) in trans, removing L-serine, has no aminoacylation activity. In vitro when both subunits are present, or if the 2 subunits are fused, L-seryl-tRNA(Thr) is no longer produced. Has no activity on correctly acylated L-seryl-tRNA(Ser) or L-threonyl-tRNA(Thr). Editing is probably catalyzed by the 2'-OH of A76 of tRNA(Thr). In Saccharolobus solfataricus (strain ATCC 35092 / DSM 1617 / JCM 11322 / P2) (Sulfolobus solfataricus), this protein is Threonine--tRNA ligase editing subunit.